Here is a 378-residue protein sequence, read N- to C-terminus: Acetylornithine deacetylase (378 aa).

A Zn(2+)-binding site is contributed by His76. Residue Asp78 is part of the active site. Asp108 lines the Zn(2+) pocket. Residue Glu140 is part of the active site. Zn(2+) contacts are provided by Glu141, Glu165, and His351.

The protein belongs to the peptidase M20A family. ArgE subfamily. Homodimer. Zn(2+) serves as cofactor. It depends on Co(2+) as a cofactor. Glutathione is required as a cofactor.

It localises to the cytoplasm. The catalysed reaction is N(2)-acetyl-L-ornithine + H2O = L-ornithine + acetate. The protein operates within amino-acid biosynthesis; L-arginine biosynthesis; L-ornithine from N(2)-acetyl-L-ornithine (linear): step 1/1. Its function is as follows. Catalyzes the hydrolysis of the amide bond of N(2)-acetylated L-amino acids. Cleaves the acetyl group from N-acetyl-L-ornithine to form L-ornithine, an intermediate in L-arginine biosynthesis pathway, and a branchpoint in the synthesis of polyamines. This chain is Acetylornithine deacetylase, found in Aliivibrio fischeri (strain MJ11) (Vibrio fischeri).